We begin with the raw amino-acid sequence, 317 residues long: Probable cell division protein WhiA (317 aa).

The segment at residues 281-314 (TLKELGEMINPPIGKSGVNHRLRKLDQIADRERG) is a DNA-binding region (H-T-H motif).

Belongs to the WhiA family.

Involved in cell division and chromosome segregation. The chain is Probable cell division protein WhiA from Alkaliphilus metalliredigens (strain QYMF).